Reading from the N-terminus, the 500-residue chain is ADP,ATP carrier protein 5 (500 aa).

The next 11 helical transmembrane spans lie at 21–41 (IYNYELGKFIPMSALMFCILF), 62–82 (IAGFAKVYCVTPAAALFVIIY), 94–114 (IFYYLTAFFIGFFVLFAFVIY), 149–169 (YIVYYSLAELWPNIFYVLLFW), 184–204 (FYTLFSLFGNSSLILVGFLMM), 224–244 (ITLVQISTILVTIVAVICCLL), 287–307 (LWLLLICSAAFGFAINLVEAV), 328–348 (LYILWTGVAIMVMTIIGNNVM), 357–377 (AVISPVIIMVTGVLFFVLIVF), 381–401 (ILSLFDGAILMSPLALAVSIG), and 469–489 (SISPVLMVVFTFVCLAWIYAV).

This sequence belongs to the ADP/ATP translocase tlc family.

The protein localises to the cell membrane. Its function is as follows. Provides the rickettsial cell with host ATP in exchange for rickettsial ADP. This is an obligate exchange system. This energy acquiring activity is an important component of rickettsial parasitism. The polypeptide is ADP,ATP carrier protein 5 (tlcE) (Rickettsia bellii (strain RML369-C)).